The chain runs to 415 residues: Polyadenylate-binding protein RBP45C (415 aa).

A disordered region spans residues 1–77 (MMQQPPPASN…GGSQNPGSAG (77 aa)). Over residues 23 to 64 (QQAYLQQQQSWMMQHQQQQQGQPPAGWNQQSAPSSGQPQQQQ) the composition is skewed to low complexity. 3 RRM domains span residues 80–160 (RSLW…WAQL), 173–252 (HTVF…PAAN), and 278–350 (TTIF…WGRS). Over residues 344-356 (RLSWGRSPSNKQT) the composition is skewed to polar residues. Positions 344 to 369 (RLSWGRSPSNKQTQPDQAQYGGGGGY) are disordered.

This sequence belongs to the polyadenylate-binding RBP45 family. In terms of assembly, interacts with the poly(A) tail of mRNA in nucleus. In terms of tissue distribution, mostly expressed in seedlings and stems, and, to a lower extent, in leaves and flowers.

Its subcellular location is the nucleus. In terms of biological role, heterogeneous nuclear ribonucleoprotein (hnRNP)-protein binding the poly(A) tail of mRNA and probably involved in some steps of pre-mRNA maturation. The sequence is that of Polyadenylate-binding protein RBP45C (RBP45C) from Arabidopsis thaliana (Mouse-ear cress).